We begin with the raw amino-acid sequence, 730 residues long: Polyribonucleotide nucleotidyltransferase (730 aa).

2 residues coordinate Mg(2+): aspartate 494 and aspartate 500. In terms of domain architecture, KH spans 561 to 622 (PRIQTIQIDP…EAMNRAIQEI (62 aa)). Residues 642–711 (GKIYTGRVTG…RSGKVRLSRK (70 aa)) form the S1 motif domain.

This sequence belongs to the polyribonucleotide nucleotidyltransferase family. Mg(2+) serves as cofactor.

The protein resides in the cytoplasm. The enzyme catalyses RNA(n+1) + phosphate = RNA(n) + a ribonucleoside 5'-diphosphate. Its function is as follows. Involved in mRNA degradation. Catalyzes the phosphorolysis of single-stranded polyribonucleotides processively in the 3'- to 5'-direction. This chain is Polyribonucleotide nucleotidyltransferase, found in Opitutus terrae (strain DSM 11246 / JCM 15787 / PB90-1).